We begin with the raw amino-acid sequence, 567 residues long: Urease subunit alpha (567 aa).

Positions 129–567 (GGIDAHIHFI…LPLTQRYCLF (439 aa)) constitute a Urease domain. 3 residues coordinate Ni(2+): His134, His136, and Lys217. Lys217 bears the N6-carboxylysine mark. Residue His219 coordinates substrate. The Ni(2+) site is built by His246 and His272. Catalysis depends on His320, which acts as the Proton donor. Ni(2+) is bound at residue Asp360.

Belongs to the metallo-dependent hydrolases superfamily. Urease alpha subunit family. As to quaternary structure, heterotrimer of UreA (gamma), UreB (beta) and UreC (alpha) subunits. Three heterotrimers associate to form the active enzyme. Ni cation serves as cofactor. In terms of processing, carboxylation allows a single lysine to coordinate two nickel ions.

Its subcellular location is the cytoplasm. The catalysed reaction is urea + 2 H2O + H(+) = hydrogencarbonate + 2 NH4(+). Its pathway is nitrogen metabolism; urea degradation; CO(2) and NH(3) from urea (urease route): step 1/1. The sequence is that of Urease subunit alpha from Psychromonas ingrahamii (strain DSM 17664 / CCUG 51855 / 37).